The primary structure comprises 103 residues: Small ribosomal subunit protein uS10 (103 aa).

Belongs to the universal ribosomal protein uS10 family. As to quaternary structure, part of the 30S ribosomal subunit.

Functionally, involved in the binding of tRNA to the ribosomes. The sequence is that of Small ribosomal subunit protein uS10 from Mycoplasmopsis pulmonis (strain UAB CTIP) (Mycoplasma pulmonis).